A 966-amino-acid polypeptide reads, in one-letter code: Glycine dehydrogenase (decarboxylating) (966 aa).

Lys713 carries the post-translational modification N6-(pyridoxal phosphate)lysine.

Belongs to the GcvP family. The glycine cleavage system is composed of four proteins: P, T, L and H. Requires pyridoxal 5'-phosphate as cofactor.

It catalyses the reaction N(6)-[(R)-lipoyl]-L-lysyl-[glycine-cleavage complex H protein] + glycine + H(+) = N(6)-[(R)-S(8)-aminomethyldihydrolipoyl]-L-lysyl-[glycine-cleavage complex H protein] + CO2. Functionally, the glycine cleavage system catalyzes the degradation of glycine. The P protein binds the alpha-amino group of glycine through its pyridoxal phosphate cofactor; CO(2) is released and the remaining methylamine moiety is then transferred to the lipoamide cofactor of the H protein. The polypeptide is Glycine dehydrogenase (decarboxylating) (Psychromonas ingrahamii (strain DSM 17664 / CCUG 51855 / 37)).